The primary structure comprises 237 residues: Peroxisomal membrane protein 11-1 (237 aa).

The Cytoplasmic segment spans residues 1-92; it reads MSTLDATRAE…TLVLLGKSKN (92 aa). A helical membrane pass occupies residues 93-113; sequence ALLSTFLFLDQFVWLGRTGIY. At 114-204 the chain is on the lumenal side; that stretch reads KNKERTDRIV…VGLLQLSPKK (91 aa). A helical membrane pass occupies residues 205 to 223; sequence ITPRVTGAFGFVTSLISCY. At 224–237 the chain is on the cytoplasmic side; it reads QQLPSRAPAIKVKA.

Belongs to the peroxin-11 family. Expressed in seedlings, leaf sheaths, flag leaf, panicles and spikelets.

It is found in the peroxisome membrane. In terms of biological role, involved in peroxisomal proliferation. The sequence is that of Peroxisomal membrane protein 11-1 (PEX11-1) from Oryza sativa subsp. japonica (Rice).